Consider the following 293-residue polypeptide: CDP-abequose synthase (293 aa).

Thr-113 contributes to the substrate binding site. Tyr-130 (proton acceptor) is an active-site residue.

The protein belongs to the NAD(P)-dependent epimerase/dehydratase family.

It carries out the reaction CDP-alpha-D-abequose + NADP(+) = CDP-4-dehydro-3,6-dideoxy-alpha-D-glucose + NADPH + H(+). It functions in the pathway bacterial outer membrane biogenesis; LPS O-antigen biosynthesis. The protein is CDP-abequose synthase of Salmonella muenchen.